The primary structure comprises 200 residues: 3-isopropylmalate dehydratase small subunit (200 aa).

Belongs to the LeuD family. LeuD type 1 subfamily. Heterodimer of LeuC and LeuD.

It catalyses the reaction (2R,3S)-3-isopropylmalate = (2S)-2-isopropylmalate. It participates in amino-acid biosynthesis; L-leucine biosynthesis; L-leucine from 3-methyl-2-oxobutanoate: step 2/4. Catalyzes the isomerization between 2-isopropylmalate and 3-isopropylmalate, via the formation of 2-isopropylmaleate. This is 3-isopropylmalate dehydratase small subunit from Haemophilus influenzae (strain 86-028NP).